The following is a 215-amino-acid chain: Imidazole glycerol phosphate synthase subunit HisH (215 aa).

The Glutamine amidotransferase type-1 domain maps to 7–215 (TIAVIDYGMG…LLKNFVEWQP (209 aa)). Residue Cys-86 is the Nucleophile of the active site. Catalysis depends on residues His-195 and Glu-197.

As to quaternary structure, heterodimer of HisH and HisF.

The protein resides in the cytoplasm. It catalyses the reaction 5-[(5-phospho-1-deoxy-D-ribulos-1-ylimino)methylamino]-1-(5-phospho-beta-D-ribosyl)imidazole-4-carboxamide + L-glutamine = D-erythro-1-(imidazol-4-yl)glycerol 3-phosphate + 5-amino-1-(5-phospho-beta-D-ribosyl)imidazole-4-carboxamide + L-glutamate + H(+). It carries out the reaction L-glutamine + H2O = L-glutamate + NH4(+). It functions in the pathway amino-acid biosynthesis; L-histidine biosynthesis; L-histidine from 5-phospho-alpha-D-ribose 1-diphosphate: step 5/9. Its function is as follows. IGPS catalyzes the conversion of PRFAR and glutamine to IGP, AICAR and glutamate. The HisH subunit catalyzes the hydrolysis of glutamine to glutamate and ammonia as part of the synthesis of IGP and AICAR. The resulting ammonia molecule is channeled to the active site of HisF. This chain is Imidazole glycerol phosphate synthase subunit HisH, found in Dechloromonas aromatica (strain RCB).